A 147-amino-acid polypeptide reads, in one-letter code: Deoxyuridine 5'-triphosphate nucleotidohydrolase (147 aa).

Residues Arg67–Gly69, Asn80, and Thr84–Asp86 contribute to the substrate site.

The protein belongs to the dUTPase family. It depends on Mg(2+) as a cofactor.

The enzyme catalyses dUTP + H2O = dUMP + diphosphate + H(+). It participates in pyrimidine metabolism; dUMP biosynthesis; dUMP from dCTP (dUTP route): step 2/2. This enzyme is involved in nucleotide metabolism: it produces dUMP, the immediate precursor of thymidine nucleotides and it decreases the intracellular concentration of dUTP so that uracil cannot be incorporated into DNA. The sequence is that of Deoxyuridine 5'-triphosphate nucleotidohydrolase from Anaeromyxobacter sp. (strain Fw109-5).